We begin with the raw amino-acid sequence, 1131 residues long: Activity-dependent neuroprotector homeobox protein 2 (1131 aa).

The C2H2-type 1 zinc finger occupies Tyr-73–His-96. Residues Ile-106 to His-128 form a C2H2-type 2; degenerate zinc finger. Residues Lys-118 and Lys-146 each participate in a glycyl lysine isopeptide (Lys-Gly) (interchain with G-Cter in SUMO2) cross-link. The C2H2-type 3; degenerate zinc-finger motif lies at Phe-155–His-178. The C2H2-type 4 zinc finger occupies Tyr-215–His-240. Over residues Leu-274 to Ala-285 the composition is skewed to low complexity. Residues Leu-274 to Ser-329 are disordered. A C2H2-type 5; degenerate zinc finger spans residues Lys-694–His-716. The C2H2-type 6; degenerate zinc finger occupies Val-747–His-768. 2 C2H2-type zinc fingers span residues Leu-770 to His-793 and Ser-875 to His-898. The segment at Phe-913 to Arg-937 adopts a C2H2-type 9; degenerate zinc-finger fold. Residues Lys-979 and Lys-1018 each participate in a glycyl lysine isopeptide (Lys-Gly) (interchain with G-Cter in SUMO2) cross-link. Ser-1024 carries the phosphoserine modification. A Glycyl lysine isopeptide (Lys-Gly) (interchain with G-Cter in SUMO1); alternate cross-link involves residue Lys-1032. A Glycyl lysine isopeptide (Lys-Gly) (interchain with G-Cter in SUMO2); alternate cross-link involves residue Lys-1032. Residues Pro-1043–Ile-1102 constitute a DNA-binding region (homeobox).

This sequence belongs to the krueppel C2H2-type zinc-finger protein family. May interact with SMARCA4/BRG1.

The protein resides in the nucleus. Its function is as follows. May be involved in transcriptional regulation. May play a role in neuronal function; perhaps involved in protection of brain tissues from oxidative stress. May be involved in erythroid differentiation. This chain is Activity-dependent neuroprotector homeobox protein 2 (ADNP2), found in Homo sapiens (Human).